We begin with the raw amino-acid sequence, 1143 residues long: Disease resistance protein Pikm1-TS (1143 aa).

Residues 1–190 (MEAAAMAVTA…PLRIMGGEMQ (190 aa)) are structured coiled coil (CC) domain. The 70-residue stretch at 189–258 (MQKIVFKIPM…KVGPAMFLEV (70 aa)) folds into the HMA domain. The tract at residues 191-264 (KIVFKIPMVD…FLEVSQVKED (74 aa)) is HMA-like domain. The NB-ARC domain occupies 282–570 (HEVKTICILG…WIAEGFVSEE (289 aa)). 10 LRR repeats span residues 681-706 (FKRL…ICEQ), 708-731 (SLRV…MRKL), 732-754 (KHLE…IGEL), 756-777 (HLRI…IREL), 778-800 (QHLH…VGKL), 802-823 (NLKI…IGEL), 824-848 (NHLQ…QISQ), 945-968 (MPNL…INGT), 979-1002 (DSRV…EFKF), and 1004-1027 (AGPA…VFRC).

The protein belongs to the disease resistance NB-LRR family. Interacts with AVR-Pik through its N-terminal part containing the HMA-like domain. As to expression, constitutively expressed.

Its function is as follows. Disease resistance (R) protein that specifically recognizes the AVR-Pik effector avirulence protein from M.oryzae. Resistance proteins guard the plant against pathogens that contain an appropriate avirulence protein via an indirect interaction with this avirulence protein. That triggers a defense system including the hypersensitive response, which restricts the pathogen growth. Contribution of Pikm-2 is required to recognize the effector avirulence protein AVR-Pik. The protein is Disease resistance protein Pikm1-TS of Oryza sativa subsp. japonica (Rice).